The following is a 189-amino-acid chain: CASP-like protein 1F2 (189 aa).

Residues Met-1–Gly-27 lie on the Cytoplasmic side of the membrane. The helical transmembrane segment at Phe-28–Ala-48 threads the bilayer. Topologically, residues Val-49–Leu-77 are extracellular. Residues Val-78–Phe-98 traverse the membrane as a helical segment. The Cytoplasmic segment spans residues Asn-99–Asp-113. A helical membrane pass occupies residues Leu-114–Gly-134. Residues Arg-135 to Lys-156 lie on the Extracellular side of the membrane. A helical membrane pass occupies residues Ala-157 to Met-177. Residues Ala-178–Ile-189 are Cytoplasmic-facing.

Belongs to the Casparian strip membrane proteins (CASP) family. As to quaternary structure, homodimer and heterodimers.

It localises to the cell membrane. This chain is CASP-like protein 1F2, found in Vitis vinifera (Grape).